A 226-amino-acid chain; its full sequence is DELTA-alicitoxin-Pse1b (226 aa).

The N-terminal stretch at 1-21 (MRHFVVFLYMFLALSIPTAFA) is a signal peptide. The propeptide occupies 22–45 (KKHIVTKKGNHQDITNDNEGENAE). The plays an important role in the hemolytic activity stretch occupies residues 50-59 (TVAGAVIAGG). The interval 58-77 (GGELALKILTKILYEIGKID) is N-terminal region. The phosphocholine site is built by S101, V134, S152, P154, Y180, and Y184. Positions 152 to 167 (SVPFDYNLYSNWWNVK) are trp-rich region, which is important for the binding to lipid membrane.

This sequence belongs to the actinoporin family. Sea anemone subfamily. As to quaternary structure, octamer or nonamer in membranes. Monomer in the soluble state.

The protein localises to the secreted. It localises to the nematocyst. The protein resides in the target cell membrane. Pore-forming protein that forms cations-selective hydrophilic pores of around 1 nm and causes cytolysis. Pore formation is a multi-step process that involves specific recognition of membrane sphingomyelin (but neither cholesterol nor phosphatidylcholine) using aromatic rich region and adjacent phosphocholine (POC) binding site, firm binding to the membrane (mainly driven by hydrophobic interactions) accompanied by the transfer of the N-terminal region to the lipid-water interface and finally pore formation after oligomerization of monomers. The polypeptide is DELTA-alicitoxin-Pse1b (Phyllodiscus semoni (Night anemone)).